A 480-amino-acid polypeptide reads, in one-letter code: Protein nucleotidyltransferase YdiU (480 aa).

ATP is bound by residues Gly87, Gly89, Arg90, Lys110, Asp122, Gly123, Arg173, and Arg180. The active-site Proton acceptor is the Asp245. Residues Asn246 and Asp255 each contribute to the Mg(2+) site. Residue Asp255 participates in ATP binding.

It belongs to the SELO family. Mg(2+) serves as cofactor. It depends on Mn(2+) as a cofactor.

It carries out the reaction L-seryl-[protein] + ATP = 3-O-(5'-adenylyl)-L-seryl-[protein] + diphosphate. The enzyme catalyses L-threonyl-[protein] + ATP = 3-O-(5'-adenylyl)-L-threonyl-[protein] + diphosphate. It catalyses the reaction L-tyrosyl-[protein] + ATP = O-(5'-adenylyl)-L-tyrosyl-[protein] + diphosphate. The catalysed reaction is L-histidyl-[protein] + UTP = N(tele)-(5'-uridylyl)-L-histidyl-[protein] + diphosphate. It carries out the reaction L-seryl-[protein] + UTP = O-(5'-uridylyl)-L-seryl-[protein] + diphosphate. The enzyme catalyses L-tyrosyl-[protein] + UTP = O-(5'-uridylyl)-L-tyrosyl-[protein] + diphosphate. Nucleotidyltransferase involved in the post-translational modification of proteins. It can catalyze the addition of adenosine monophosphate (AMP) or uridine monophosphate (UMP) to a protein, resulting in modifications known as AMPylation and UMPylation. This is Protein nucleotidyltransferase YdiU from Jannaschia sp. (strain CCS1).